A 396-amino-acid polypeptide reads, in one-letter code: Elongation factor Tu 2 (396 aa).

The region spanning 10–206 (KPHCNIGTIG…AVDAYIPQPE (197 aa)) is the tr-type G domain. The G1 stretch occupies residues 19–26 (GHVDHGKT). 19-26 (GHVDHGKT) contributes to the GTP binding site. Residue threonine 26 participates in Mg(2+) binding. A G2 region spans residues 60–64 (GITIS). A G3 region spans residues 81 to 84 (DCPG). GTP-binding positions include 81–85 (DCPGH) and 136–139 (NKCD). Positions 136–139 (NKCD) are G4. The G5 stretch occupies residues 174 to 176 (SAL).

The protein belongs to the TRAFAC class translation factor GTPase superfamily. Classic translation factor GTPase family. EF-Tu/EF-1A subfamily. As to quaternary structure, monomer.

The protein resides in the cytoplasm. The catalysed reaction is GTP + H2O = GDP + phosphate + H(+). GTP hydrolase that promotes the GTP-dependent binding of aminoacyl-tRNA to the A-site of ribosomes during protein biosynthesis. The protein is Elongation factor Tu 2 of Rhodopseudomonas palustris (strain BisB5).